The following is a 314-amino-acid chain: Olfactory receptor 11H7 (314 aa).

Topologically, residues 1–24 (MNNSQISTVTQFVLLGFPGPWKIQ) are extracellular. Residue Asn-2 is glycosylated (N-linked (GlcNAc...) asparagine). A helical membrane pass occupies residues 25–45 (IIFFSMILLVYIFTLTGNMAI). The Cytoplasmic segment spans residues 46–57 (ICAVRWDHRLHT). The chain crosses the membrane as a helical span at residues 58–78 (PMYVLLANFSFLEIWYVTCTV). At 79-97 (PNMLVNFFSKTKTISFSGC) the chain is on the extracellular side. The cysteines at positions 97 and 179 are disulfide-linked. A helical membrane pass occupies residues 98-118 (FTQFHFFFSLGTTECFFLCVM). At 119–142 (AYDRYLAICHPLHYPSIMTGQLCG) the chain is on the cytoplasmic side. Residues 143–163 (ILVSLCWLIGFLGHSISIFFI) form a helical membrane-spanning segment. Residues 164 to 201 (FQLPFCGPNIIDHFLCDVDPLMALSSAPTHIIGHVFHS) lie on the Extracellular side of the membrane. A helical membrane pass occupies residues 202–222 (VSSLFINLTMVYILGSYTLVL). At 223–244 (RTVLQVPSSAGWQKAISTCGSH) the chain is on the cytoplasmic side. The chain crosses the membrane as a helical span at residues 245 to 265 (LVVVSLFYGAIMLMYVSPTPG). Topologically, residues 266–271 (NSVAMH) are extracellular. The chain crosses the membrane as a helical span at residues 272 to 292 (KLITLIYSVVTPVLNPLIYSL). The Cytoplasmic portion of the chain corresponds to 293-314 (RNKDMKYALHHVFCGMRIIQRS).

This sequence belongs to the G-protein coupled receptor 1 family.

It is found in the cell membrane. Odorant receptor. Activated by isovaleric acid. The sequence is that of Olfactory receptor 11H7 (OR11H7) from Homo sapiens (Human).